Here is a 978-residue protein sequence, read N- to C-terminus: Macrophage colony-stimulating factor 1 receptor (978 aa).

The signal sequence occupies residues 1-19 (MELGPPLVLLLATVWHGQG). The Extracellular segment spans residues 20–515 (APVIEPSGPE…QLPDESLFTP (496 aa)). 5 Ig-like C2-type domains span residues 24-104 (EPSG…VKDP), 107-197 (SWNL…KVNR), 204-298 (QIKL…VVES), 299-397 (AYLN…LTLR), and 398-503 (YPPE…SLGQ). Cystine bridges form between cysteine 42/cysteine 84, cysteine 127/cysteine 177, and cysteine 224/cysteine 278. N-linked (GlcNAc...) asparagine glycosylation is found at asparagine 45 and asparagine 73. Residues asparagine 302, asparagine 335, asparagine 389, asparagine 410, asparagine 449, asparagine 478, and asparagine 491 are each glycosylated (N-linked (GlcNAc...) asparagine). Cysteine 417 and cysteine 483 are oxidised to a cystine. Residues 516-536 (VVVACMSVMSLLVLLLLLLLY) traverse the membrane as a helical segment. At 537-978 (KYKQKPKYQV…LQPNNYQFAC (442 aa)) the chain is on the cytoplasmic side. The segment at 540–572 (QKPKYQVRWKIIERYEGNSYTFIDPTQLPYNEK) is regulatory juxtamembrane domain. A phosphotyrosine; by autocatalysis mark is found at tyrosine 544 and tyrosine 559. A Protein kinase domain is found at 580–914 (LQFGKTLGAG…CFLLQEQARL (335 aa)). ATP-binding positions include 586-594 (LGAGAFGKV) and lysine 614. 2 positions are modified to phosphotyrosine; by autocatalysis: tyrosine 697 and tyrosine 706. A Phosphoserine modification is found at serine 711. Residue tyrosine 721 is modified to Phosphotyrosine; by autocatalysis. Catalysis depends on aspartate 776, which acts as the Proton acceptor. Residues 794 to 816 (DFGLARDIMNDSNYVVKGNARLP) form an activation loop region. Phosphotyrosine; by autocatalysis occurs at positions 807 and 921. The segment at 921–957 (YANLPSSGGSSGSDSGGGSSGGSSSEPEEESSSEHLA) is disordered. Residues 929-941 (GSSGSDSGGGSSG) show a composition bias toward gly residues. Tyrosine 974 carries the post-translational modification Phosphotyrosine; by autocatalysis.

It belongs to the protein kinase superfamily. Tyr protein kinase family. CSF-1/PDGF receptor subfamily. In terms of assembly, monomer. Homodimer. Interacts with CSF1 and IL34. Interaction with dimeric CSF1 or IL34 leads to receptor homodimerization. Interacts with INPPL1/SHIP2 and THOC5. Interacts (tyrosine phosphorylated) with PLCG2 (via SH2 domain). Interacts (tyrosine phosphorylated) with PIK3R1 (via SH2 domain). Interacts (tyrosine phosphorylated) with FYN, YES1 and SRC (via SH2 domain). Interacts (tyrosine phosphorylated) with CBL, GRB2 and SLA2. Post-translationally, autophosphorylated in response to CSF1 or IL34 binding. Phosphorylation at Tyr-559 is important for normal down-regulation of signaling by ubiquitination, internalization and degradation. Phosphorylation at Tyr-559 and Tyr-807 is important for interaction with SRC family members, including FYN, YES1 and SRC, and for subsequent activation of these protein kinases. Phosphorylation at Tyr-697 and Tyr-921 is important for interaction with GRB2. Phosphorylation at Tyr-721 is important for interaction with PIK3R1. Phosphorylation at Tyr-721 and Tyr-807 is important for interaction with PLCG2. Phosphorylation at Tyr-974 is important for interaction with CBL. Dephosphorylation by PTPN2 negatively regulates downstream signaling and macrophage differentiation. In terms of processing, ubiquitinated. Becomes rapidly polyubiquitinated after autophosphorylation, leading to its degradation.

The protein resides in the cell membrane. It carries out the reaction L-tyrosyl-[protein] + ATP = O-phospho-L-tyrosyl-[protein] + ADP + H(+). With respect to regulation, present in an inactive conformation in the absence of bound ligand. CSF1 or IL34 binding leads to dimerization and activation by autophosphorylation on tyrosine residues. Functionally, tyrosine-protein kinase that acts as a cell-surface receptor for CSF1 and IL34 and plays an essential role in the regulation of survival, proliferation and differentiation of hematopoietic precursor cells, especially mononuclear phagocytes, such as macrophages and monocytes. Promotes the release of pro-inflammatory chemokines in response to IL34 and CSF1, and thereby plays an important role in innate immunity and in inflammatory processes. Plays an important role in the regulation of osteoclast proliferation and differentiation, the regulation of bone resorption, and is required for normal bone and tooth development. Required for normal male and female fertility, and for normal development of milk ducts and acinar structures in the mammary gland during pregnancy. Promotes reorganization of the actin cytoskeleton, regulates formation of membrane ruffles, cell adhesion and cell migration, and promotes cancer cell invasion. Activates several signaling pathways in response to ligand binding, including the ERK1/2 and the JNK pathway. Phosphorylates PIK3R1, PLCG2, GRB2, SLA2 and CBL. Activation of PLCG2 leads to the production of the cellular signaling molecules diacylglycerol and inositol 1,4,5-trisphosphate, that then lead to the activation of protein kinase C family members, especially PRKCD. Phosphorylation of PIK3R1, the regulatory subunit of phosphatidylinositol 3-kinase, leads to activation of the AKT1 signaling pathway. Activated CSF1R also mediates activation of the MAP kinases MAPK1/ERK2 and/or MAPK3/ERK1, and of the SRC family kinases SRC, FYN and YES1. Activated CSF1R transmits signals both via proteins that directly interact with phosphorylated tyrosine residues in its intracellular domain, or via adapter proteins, such as GRB2. Promotes activation of STAT family members STAT3, STAT5A and/or STAT5B. Promotes tyrosine phosphorylation of SHC1 and INPP5D/SHIP-1. Receptor signaling is down-regulated by protein phosphatases, such as INPP5D/SHIP-1, that dephosphorylate the receptor and its downstream effectors, and by rapid internalization of the activated receptor. In the central nervous system, may play a role in the development of microglia macrophages. The chain is Macrophage colony-stimulating factor 1 receptor (Csf1r) from Rattus norvegicus (Rat).